The following is a 162-amino-acid chain: Retinoic acid receptor responder protein 2 (162 aa).

The N-terminal stretch at 1 to 20 is a signal peptide; that stretch reads MWQLLLPLALGLGTMGLGRA. Intrachain disulfides connect Cys-77–Cys-87, Cys-98–Cys-117, and Cys-101–Cys-135. Positions 156–162 are excised as a propeptide; it reads FIKALSP.

Post-translationally, secreted in an inactive precursor form, prochemerin, which is proteolytically processed by a variety of extracellular proteases to generate forms with differing levels of bioactivity. For example, the removal of five amino acids results in chemerin-157, which exhibits the highest activity, while removal of six amino acids results in chemerin-156 which has slightly less activity. Some proteases are able to cleave at more than one site and chemerin forms may be sequentially processed by different enzymes to modulate activity levels. The coordinated expression and activity of chemerin-modifying enzymes is essential for regulating its bioactivation, inactivation and, consequently, biological function. Cathepsin G cleaves six C-terminal amino acids from prochemerin (chemerin-156), elastase is able to cleave five (chemerin-157), seven (chemerin-155) or ten (chemerin-152), plasmin cleaves four amino acids (chemerin-158), and tryptase cleaves four (chemerin-158) or seven (chemerin-155). Multiple cleavages might be required to fully activate chemerin, with an initial tryptase cleavage resulting in chemerin with low activity (chemerin-158), and a second cleavage by carboxypeptidase N or B producing highly active chemerin (chemerin-157).

Its subcellular location is the secreted. Adipocyte-secreted protein (adipokine) that regulates adipogenesis, metabolism and inflammation through activation of the chemokine-like receptor 1 (CMKLR1). Also acts as a ligand for CMKLR2. Can also bind to C-C chemokine receptor-like 2 (CCRL2), but with a lower affinity than it does to CMKLR1 or CMKLR2. Positively regulates adipocyte differentiation, modulates the expression of adipocyte genes involved in lipid and glucose metabolism and might play a role in angiogenesis, a process essential for the expansion of white adipose tissue. Also acts as a pro-inflammatory adipokine, causing an increase in secretion of pro-inflammatory and prodiabetic adipokines, which further impair adipose tissue metabolic function and have negative systemic effects including impaired insulin sensitivity, altered glucose and lipid metabolism, and a decrease in vascular function in other tissues. Can have both pro- and anti-inflammatory properties depending on the modality of enzymatic cleavage by different classes of proteases. Acts as a chemotactic factor for leukocyte populations expressing CMKLR1, particularly immature plasmacytoid dendritic cells, but also immature myeloid DCs, macrophages and natural killer cells. Exerts an anti-inflammatory role by preventing TNF/TNFA-induced VCAM1 expression and monocytes adhesion in vascular endothelial cells. The effect is mediated via inhibiting activation of NF-kappa-B and CRK/p38 through stimulation of AKT1/NOS3 signaling and nitric oxide production. Exhibits an antimicrobial function in the skin. The polypeptide is Retinoic acid receptor responder protein 2 (RARRES2) (Bos taurus (Bovine)).